Reading from the N-terminus, the 310-residue chain is 2-dehydropantoate 2-reductase (310 aa).

Residues 9-14 (GVGAIG) and Asn100 each bind NADP(+). Asn100 serves as a coordination point for substrate. The active-site Proton donor is the Lys184. Residues Asn188, Asn192, and Ser259 each coordinate substrate. Glu270 provides a ligand contact to NADP(+).

Belongs to the ketopantoate reductase family.

Its subcellular location is the cytoplasm. The enzyme catalyses (R)-pantoate + NADP(+) = 2-dehydropantoate + NADPH + H(+). It functions in the pathway cofactor biosynthesis; (R)-pantothenate biosynthesis; (R)-pantoate from 3-methyl-2-oxobutanoate: step 2/2. Catalyzes the NADPH-dependent reduction of ketopantoate into pantoic acid. The protein is 2-dehydropantoate 2-reductase of Aquifex aeolicus (strain VF5).